The chain runs to 779 residues: Endonuclease MutS2 (779 aa).

328 to 335 (GPNTGGKT) contacts ATP. A Smr domain is found at 704–779 (LDLRGKRYEE…GSGATIVTLG (76 aa)).

It belongs to the DNA mismatch repair MutS family. MutS2 subfamily. In terms of assembly, homodimer. Binds to stalled ribosomes, contacting rRNA.

In terms of biological role, endonuclease that is involved in the suppression of homologous recombination and thus may have a key role in the control of bacterial genetic diversity. Its function is as follows. Acts as a ribosome collision sensor, splitting the ribosome into its 2 subunits. Detects stalled/collided 70S ribosomes which it binds and splits by an ATP-hydrolysis driven conformational change. Acts upstream of the ribosome quality control system (RQC), a ribosome-associated complex that mediates the extraction of incompletely synthesized nascent chains from stalled ribosomes and their subsequent degradation. Probably generates substrates for RQC. The polypeptide is Endonuclease MutS2 (Streptococcus pyogenes serotype M18 (strain MGAS8232)).